A 253-amino-acid chain; its full sequence is Small ribosomal subunit protein eS4 (253 aa).

The region spanning 43-114 (LPLLLIVRNV…YPVKFFKLHP (72 aa)) is the S4 RNA-binding domain.

It belongs to the eukaryotic ribosomal protein eS4 family.

The polypeptide is Small ribosomal subunit protein eS4 (rps4e) (Aeropyrum pernix (strain ATCC 700893 / DSM 11879 / JCM 9820 / NBRC 100138 / K1)).